Here is a 299-residue protein sequence, read N- to C-terminus: Junctional adhesion molecule A (299 aa).

The N-terminal stretch at 1 to 27 (MGTKAQVERKLLCLFILAILLCSLALG) is a signal peptide. 2 Ig-like V-type domains span residues 28 to 125 (SVTV…VKVK) and 135 to 228 (PTVN…NAVR). At 28 to 238 (SVTVHSSEPE…MEAVERNVGV (211 aa)) the chain is on the extracellular side. 2 disulfide bridges follow: Cys-50-Cys-109 and Cys-153-Cys-212. Asn-185 is a glycosylation site (N-linked (GlcNAc...) asparagine). The helical transmembrane segment at 239–259 (IVAAVLVTLILLGILVFGIWF) threads the bilayer. The Cytoplasmic segment spans residues 260-299 (AYSRGHFDRTKKGTSSKKVIYSQPSARSEGEFKQTSSFLV). A phosphoserine mark is found at Ser-281, Ser-284, and Ser-287.

It belongs to the immunoglobulin superfamily. In terms of assembly, interacts with the ninth PDZ domain of MPDZ. Interacts with the first PDZ domain of PARD3. The association between PARD3 and PARD6B probably disrupts this interaction. Interacts with ITGAL (via I-domain). Interacts with CD151. As to quaternary structure, (Microbial infection) Interacts with Mammalian reovirus sigma-1 capsid protein. (Microbial infection) Interacts with Human Rotavirus strain Wa vp4 capsid protein. Post-translationally, N-glycosylated. (Microbial infection) Cleaved by H.pylori virulence factor PqqE. Cleavage leads to altered tight junction functions. In terms of tissue distribution, expressed in endothelium, epithelium and leukocytes (at protein level).

It localises to the cell junction. The protein resides in the tight junction. Its subcellular location is the cell membrane. Its function is as follows. Seems to play a role in epithelial tight junction formation. Appears early in primordial forms of cell junctions and recruits PARD3. The association of the PARD6-PARD3 complex may prevent the interaction of PARD3 with JAM1, thereby preventing tight junction assembly. Plays a role in regulating monocyte transmigration involved in integrity of epithelial barrier. Ligand for integrin alpha-L/beta-2 involved in memory T-cell and neutrophil transmigration. Involved in platelet activation. (Microbial infection) Acts as a receptor for Mammalian reovirus sigma-1. In terms of biological role, (Microbial infection) Acts as a receptor for Human Rotavirus strain Wa. The protein is Junctional adhesion molecule A (F11R) of Homo sapiens (Human).